The sequence spans 203 residues: DNA-directed RNA polymerase subunit gamma (203 aa).

Cys-34, Cys-36, Cys-49, and Cys-52 together coordinate Zn(2+).

Belongs to the RNA polymerase beta' chain family. RpoC1 subfamily. In terms of assembly, in cyanobacteria the RNAP catalytic core is composed of 2 alpha, 1 beta, 1 beta', 1 gamma and 1 omega subunit. When a sigma factor is associated with the core the holoenzyme is formed, which can initiate transcription. Zn(2+) serves as cofactor.

It carries out the reaction RNA(n) + a ribonucleoside 5'-triphosphate = RNA(n+1) + diphosphate. DNA-dependent RNA polymerase catalyzes the transcription of DNA into RNA using the four ribonucleoside triphosphates as substrates. This chain is DNA-directed RNA polymerase subunit gamma (rpoC1), found in Fischerella muscicola.